The chain runs to 549 residues: Probable protein kinase UbiB (549 aa).

The 379-residue stretch at D123 to L501 folds into the Protein kinase domain. Residues L129–V137 and K152 each bind ATP. Catalysis depends on D287, which acts as the Proton acceptor. 2 consecutive transmembrane segments (helical) span residues S498–Q518 and A520–W540.

This sequence belongs to the ABC1 family. UbiB subfamily.

The protein resides in the cell inner membrane. It participates in cofactor biosynthesis; ubiquinone biosynthesis [regulation]. In terms of biological role, is probably a protein kinase regulator of UbiI activity which is involved in aerobic coenzyme Q (ubiquinone) biosynthesis. This is Probable protein kinase UbiB from Shewanella sp. (strain MR-4).